A 642-amino-acid polypeptide reads, in one-letter code: Uromodulin (642 aa).

Residues 1 to 24 form the signal peptide; that stretch reads MGIPLTWMLLVMMVTSWFTLAEAS. Asn25 and Asn38 each carry an N-linked (GlcNAc...) asparagine glycan. The 37-residue stretch at 28-64 folds into the EGF-like 1 domain; sequence EARRCSECHNNATCTVDGVVTTCSCQTGFTGDGLVCE. 21 cysteine pairs are disulfide-bonded: Cys32/Cys41, Cys35/Cys50, Cys52/Cys63, Cys69/Cys82, Cys77/Cys91, Cys93/Cys105, Cys111/Cys125, Cys119/Cys134, Cys136/Cys147, Cys149/Cys160, Cys154/Cys171, Cys175/Cys268, Cys196/Cys283, Cys218/Cys256, Cys224/Cys288, Cys249/Cys257, Cys298/Cys307, Cys301/Cys316, Cys318/Cys348, Cys336/Cys426, and Cys367/Cys390. The 42-residue stretch at 65-106 folds into the EGF-like 2; calcium-binding domain; sequence DMDECATPWTHNCSNSSCVNTPGSFKCSCQDGFRLTPELSCT. Residues Asn76 and Asn79 are each glycosylated (N-linked (GlcNAc...) asparagine). Positions 107–148 constitute an EGF-like 3; calcium-binding domain; the sequence is DVDECSEQGLSNCHALATCVNTEGDYLCVCPEGFTGDGWYCE. The beta hairpin stretch occupies residues 149-172; sequence CSPGSCEPGLDCLPQGPDGKLVCQ. The segment at 173 to 292 is D10C; that stretch reads DPCNTYETLT…CNLAYCTDPS (120 aa). N-linked (GlcNAc...) asparagine glycosylation is present at Asn233. Asn276 carries N-linked (GlcNAc...) asparagine glycosylation. In terms of domain architecture, EGF-like 4 spans 293 to 324; it reads SVEGTCEECRVDEDCISDNGRWRCQCKQDSNI. Asn323 carries N-linked (GlcNAc...) asparagine glycosylation. Positions 335-430 are ZP-N; it reads ECGANDIKMS…RMNFECSYPL (96 aa). The region spanning 335-590 is the ZP domain; it reads ECGANDIKMS…PTCSGTRFRS (256 aa). Asn397 and Asn448 each carry an N-linked (GlcNAc...) asparagine glycan. The tract at residues 431 to 454 is flexible ZP-N/ZP-C linker; important for secretion and polymerization into filaments; the sequence is DMKVSLKTSLQPMVSALNISLGGT. An internal hydrophobic patch (IHP) region spans residues 455–465; sequence GKFTVRMALFQ. The ZP-C stretch occupies residues 455–590; that stretch reads GKFTVRMALF…PTCSGTRFRS (136 aa). Intrachain disulfides connect Cys507–Cys567, Cys528–Cys583, and Cys572–Cys579. The N-linked (GlcNAc...) asparagine glycan is linked to Asn514. Residues 587–590 are essential for cleavage by HPN; the sequence is RFRS. Residues 599–607 form an external hydrophobic patch (EHP); regulates polymerization into filaments region; sequence VLNLGPITR. The GPI-anchor amidated alanine moiety is linked to residue Ala618. A propeptide spans 619-642 (removed in mature form); sequence SSNLRLLSIWLLLFPSATLIFMVQ.

As to quaternary structure, homodimer that then polymerizes into long filaments. The filaments can additionally assemble laterally to form a sheet. The filaments consist of a zigzag-shaped backbone with laterally protruding arms which interact with bacterial adhesin fimH. Two fimH molecules can bind to a single UMOD monomer. Post-translationally, N-glycosylated. In terms of processing, proteolytically cleaved at a conserved C-terminal proteolytic cleavage site to generate the secreted form found in urine. This cleavage is catalyzed by HPN. As to expression, detected in urine (secreted form). Detected in kidney thick ascending limb epithelial cells (at protein level).

The protein resides in the secreted. It localises to the apical cell membrane. It is found in the basolateral cell membrane. Its subcellular location is the cell projection. The protein localises to the cilium membrane. Its function is as follows. Functions in biogenesis and organization of the apical membrane of epithelial cells of the thick ascending limb of Henle's loop (TALH), where it promotes formation of complex filamentous gel-like structure that may play a role in the water barrier permeability. May serve as a receptor for binding and endocytosis of cytokines (IL-1, IL-2) and TNF. Facilitates neutrophil migration across renal epithelia. In the urine, may contribute to colloid osmotic pressure, retards passage of positively charged electrolytes and inhibits formation of liquid containing supersaturated salts and subsequent formation of salt crystals. Protects against urinary tract infections by binding to type 1 fimbriated E.coli. Binds to the bacterial adhesin fimH which mediates the stable formation of bacterial aggregates, prevents the binding of E.coli to uroplakins UPK1A and UPK1B which act as urothelial receptors for type I fimbriae, and allows for pathogen clearance through micturation. Also promotes aggregation of other bacteria including K.pneumoniae, P.aeruginosa and S.mitis and so may also protect against other uropathogens. In Mus musculus (Mouse), this protein is Uromodulin (Umod).